Reading from the N-terminus, the 200-residue chain is Potassium-transporting ATPase KdpC subunit (200 aa).

The chain crosses the membrane as a helical span at residues 6–26 (PALVLLILLTLITGIAYPLLT).

Belongs to the KdpC family. In terms of assembly, the system is composed of three essential subunits: KdpA, KdpB and KdpC.

It localises to the cell inner membrane. In terms of biological role, part of the high-affinity ATP-driven potassium transport (or Kdp) system, which catalyzes the hydrolysis of ATP coupled with the electrogenic transport of potassium into the cytoplasm. This subunit acts as a catalytic chaperone that increases the ATP-binding affinity of the ATP-hydrolyzing subunit KdpB by the formation of a transient KdpB/KdpC/ATP ternary complex. This is Potassium-transporting ATPase KdpC subunit from Yersinia pseudotuberculosis serotype O:1b (strain IP 31758).